Reading from the N-terminus, the 86-residue chain is Small ribosomal subunit protein bS16 (86 aa).

The protein belongs to the bacterial ribosomal protein bS16 family.

This Nostoc punctiforme (strain ATCC 29133 / PCC 73102) protein is Small ribosomal subunit protein bS16.